A 247-amino-acid chain; its full sequence is Uracil-DNA glycosylase (247 aa).

The active-site Proton acceptor is Asp83.

Belongs to the uracil-DNA glycosylase (UDG) superfamily. UNG family.

It is found in the cytoplasm. It catalyses the reaction Hydrolyzes single-stranded DNA or mismatched double-stranded DNA and polynucleotides, releasing free uracil.. Excises uracil residues from the DNA which can arise as a result of misincorporation of dUMP residues by DNA polymerase or due to deamination of cytosine. The polypeptide is Uracil-DNA glycosylase (Deinococcus radiodurans (strain ATCC 13939 / DSM 20539 / JCM 16871 / CCUG 27074 / LMG 4051 / NBRC 15346 / NCIMB 9279 / VKM B-1422 / R1)).